A 779-amino-acid polypeptide reads, in one-letter code: Endonuclease MutS2 (779 aa).

Residue 328–335 coordinates ATP; it reads GPNTGGKT. The Smr domain maps to 704 to 779; the sequence is LDLRGKRYEE…GSGATIVTLG (76 aa).

The protein belongs to the DNA mismatch repair MutS family. MutS2 subfamily. In terms of assembly, homodimer. Binds to stalled ribosomes, contacting rRNA.

Its function is as follows. Endonuclease that is involved in the suppression of homologous recombination and thus may have a key role in the control of bacterial genetic diversity. Functionally, acts as a ribosome collision sensor, splitting the ribosome into its 2 subunits. Detects stalled/collided 70S ribosomes which it binds and splits by an ATP-hydrolysis driven conformational change. Acts upstream of the ribosome quality control system (RQC), a ribosome-associated complex that mediates the extraction of incompletely synthesized nascent chains from stalled ribosomes and their subsequent degradation. Probably generates substrates for RQC. The protein is Endonuclease MutS2 of Streptococcus agalactiae serotype III (strain NEM316).